A 358-amino-acid polypeptide reads, in one-letter code: Trace amine-associated receptor 7e (358 aa).

The Extracellular segment spans residues 1-47 (MATDDASFPWDQDSILSRDLLSALSSQLCYENLNRSCIRSPYSPGPR). Residue N34 is glycosylated (N-linked (GlcNAc...) asparagine). 2 disulfides stabilise this stretch: C37–C201 and C120–C205. A helical membrane pass occupies residues 48 to 68 (LILHAVFGFSAVLAVCGNLLV). The Cytoplasmic segment spans residues 69–83 (MTSILHFRQLHSPAN). The chain crosses the membrane as a helical span at residues 84–104 (FLVASLACADLLVGLTVMPFS). The Extracellular segment spans residues 105 to 121 (MVRSVEGCWYFGDIYCK). Residues 122 to 143 (FHSSFDVSFCYSSIFHLCFISV) form a helical membrane-spanning segment. Topologically, residues 144 to 166 (DRYIAVSDPLIYLTRFTASVSGK) are cytoplasmic. Residues 167-187 (CITFSWFLSIIYSFSLLYTGA) form a helical membrane-spanning segment. Residues 188 to 212 (SEAGLEDLVSALTCVGGCQLAVNQS) are Extracellular-facing. N-linked (GlcNAc...) asparagine glycosylation occurs at N210. A helical membrane pass occupies residues 213–233 (WVFINFLLFLVPTLVMMTVYS). Residues 234 to 274 (KVFLIAKQQAQNIEKIGKQTARASESYKDRVAKRERKAAKT) lie on the Cytoplasmic side of the membrane. A helical transmembrane segment spans residues 275-295 (LGITVAAFLLSWLPYFIDSII). Residues 296 to 309 (DAFLGFITPTYVYE) are Extracellular-facing. The helical transmembrane segment at 310–333 (ILVWIAYYNSAMNPLIYAFFYPWF) threads the bilayer. The Cytoplasmic segment spans residues 334–358 (RKAIKLIVTGKILRENSSATNLFPE).

It belongs to the G-protein coupled receptor 1 family.

It is found in the cell membrane. Its function is as follows. Olfactory receptor specific for N,N-dimethylalkylamines trace amines. Trace amine compounds are enriched in animal body fluids and act on trace amine-associated receptors (TAARs) to elicit both intraspecific and interspecific innate behaviors. Ligand-binding causes a conformation change that triggers signaling via G(s)-class of G alpha proteins (GNAL or GNAS). In Rattus norvegicus (Rat), this protein is Trace amine-associated receptor 7e.